The chain runs to 559 residues: Myb/SANT-like DNA-binding domain-containing protein 2 (559 aa).

Residues 1–62 (MAAPCGSELP…GSAAGSGAAA (62 aa)) form a disordered region. Residues S13, S24, S27, S32, and S48 each carry the phosphoserine modification. Over residues 46-61 (GASPLGPGSAAGSGAA) the composition is skewed to low complexity. Residues 103-173 (SWTPAETNAL…QCRERIKTLR (71 aa)) enclose the Myb-like domain. Glycyl lysine isopeptide (Lys-Gly) (interchain with G-Cter in SUMO2) cross-links involve residues K268 and K343. S436 carries the post-translational modification Phosphoserine.

This is Myb/SANT-like DNA-binding domain-containing protein 2 (Msantd2) from Mus musculus (Mouse).